Here is a 130-residue protein sequence, read N- to C-terminus: Small ribosomal subunit protein uS8 (130 aa).

The protein belongs to the universal ribosomal protein uS8 family. Part of the 30S ribosomal subunit.

One of the primary rRNA binding proteins, it binds directly to 16S rRNA central domain where it helps coordinate assembly of the platform of the 30S subunit. The sequence is that of Small ribosomal subunit protein uS8 from Methanococcus voltae.